The following is a 135-amino-acid chain: ATP synthase epsilon chain (135 aa).

This sequence belongs to the ATPase epsilon chain family. F-type ATPases have 2 components, CF(1) - the catalytic core - and CF(0) - the membrane proton channel. CF(1) has five subunits: alpha(3), beta(3), gamma(1), delta(1), epsilon(1). CF(0) has three main subunits: a, b and c.

It is found in the cell inner membrane. Functionally, produces ATP from ADP in the presence of a proton gradient across the membrane. In Rhodopseudomonas palustris (strain HaA2), this protein is ATP synthase epsilon chain.